The following is a 466-amino-acid chain: Ribulose bisphosphate carboxylase (466 aa).

Residue asparagine 111 participates in substrate binding. Lysine 166 acts as the Proton acceptor in catalysis. Lysine 168 contacts substrate. Positions 191, 193, and 194 each coordinate Mg(2+). Lysine 191 is subject to N6-carboxylysine. Histidine 287 functions as the Proton acceptor in the catalytic mechanism. The substrate site is built by arginine 288, histidine 321, and serine 368.

The protein belongs to the RuBisCO large chain family. Type II subfamily. As to quaternary structure, homodimer. Mg(2+) is required as a cofactor.

It carries out the reaction 2 (2R)-3-phosphoglycerate + 2 H(+) = D-ribulose 1,5-bisphosphate + CO2 + H2O. The catalysed reaction is D-ribulose 1,5-bisphosphate + O2 = 2-phosphoglycolate + (2R)-3-phosphoglycerate + 2 H(+). Its function is as follows. RuBisCO catalyzes two reactions: the carboxylation of D-ribulose 1,5-bisphosphate, the primary event in carbon dioxide fixation, as well as the oxidative fragmentation of the pentose substrate. Both reactions occur simultaneously and in competition at the same active site. This Rhodospirillum rubrum protein is Ribulose bisphosphate carboxylase (cbbM).